The following is a 398-amino-acid chain: Aldo-keto reductase ausK (398 aa).

Asp-76 is an NADP(+) binding site. The Proton donor role is filled by Tyr-81. His-156 is a binding site for substrate. NADP(+)-binding positions include 186-187, Gln-212, 241-251, and 317-325; these read CN, DALGSGKFQSR, and RKIQHLHDN.

Belongs to the aldo/keto reductase family. Aldo/keto reductase 2 subfamily. In terms of assembly, homodimer.

Its pathway is secondary metabolite biosynthesis; terpenoid biosynthesis. Functionally, aldo-keto reductase; part of the gene cluster B that mediates the biosynthesis of austinol and dehydroaustinol, two fungal meroterpenoids. The first step of the pathway is the synthesis of 3,5-dimethylorsellinic acid by the polyketide synthase ausA. 3,5-dimethylorsellinic acid is then prenylated by the polyprenyl transferase ausN. Further epoxidation by the FAD-dependent monooxygenase ausM and cyclization by the probable terpene cyclase ausL lead to the formation of protoaustinoid A. Protoaustinoid A is then oxidized to spiro-lactone preaustinoid A3 by the combined action of the FAD-binding monooxygenases ausB and ausC, and the dioxygenase ausE. Acid-catalyzed keto-rearrangement and ring contraction of the tetraketide portion of preaustinoid A3 by ausJ lead to the formation of preaustinoid A4. The aldo-keto reductase ausK, with the help of ausH, is involved in the next step by transforming preaustinoid A4 into isoaustinone which is in turn hydroxylated by the P450 monooxygenase ausI to form austinolide. Finally, the cytochrome P450 monooxygenase ausG modifies austinolide to austinol. Austinol can be further modified to dehydroaustinol which forms a diffusible complex with diorcinol that initiates conidiation. Due to genetic rearrangements of the clusters and the subsequent loss of some enzymes, the end products of the Emericella nidulans austinoid biosynthesis clusters are austinol and dehydroaustinol, even if additional enzymes, such as the O-acetyltransferase ausQ and the cytochrome P450 monooxygenase ausR are still functional. This Emericella nidulans (strain FGSC A4 / ATCC 38163 / CBS 112.46 / NRRL 194 / M139) (Aspergillus nidulans) protein is Aldo-keto reductase ausK.